A 308-amino-acid chain; its full sequence is Methionyl-tRNA formyltransferase (308 aa).

109 to 112 (SLLP) provides a ligand contact to (6S)-5,6,7,8-tetrahydrofolate.

It belongs to the Fmt family.

It carries out the reaction L-methionyl-tRNA(fMet) + (6R)-10-formyltetrahydrofolate = N-formyl-L-methionyl-tRNA(fMet) + (6S)-5,6,7,8-tetrahydrofolate + H(+). Its function is as follows. Attaches a formyl group to the free amino group of methionyl-tRNA(fMet). The formyl group appears to play a dual role in the initiator identity of N-formylmethionyl-tRNA by promoting its recognition by IF2 and preventing the misappropriation of this tRNA by the elongation apparatus. The chain is Methionyl-tRNA formyltransferase from Phenylobacterium zucineum (strain HLK1).